The primary structure comprises 194 residues: E3 ubiquitin-protein ligase RNF4 (194 aa).

Residues Met-1–Gly-12 show a composition bias toward basic residues. A required for ubiquitination activity region spans residues Met-1–Thr-20. Residues Met-1–Pro-39 are disordered. Residues Pro-6–Leu-65 form a mediates interaction with TRPS1 region. The SUMO interaction motif 1; mediates the binding to polysumoylated substrates signature appears at Ile-40 to Val-43. The SUMO interaction motif 2; mediates the binding to polysumoylated substrates motif lies at Ile-50–Leu-53. The short motif at Val-61–Val-63 is the SUMO interaction motif 3; mediates the binding to polysumoylated substrates element. The SUMO interaction motif 4; mediates the binding to polysumoylated substrates signature appears at Val-71–Val-74. Ser-98 and Ser-99 each carry phosphoserine. Residues Val-110–Pro-130 are disordered. Zn(2+)-binding residues include Cys-136, Cys-139, Cys-158, His-160, Cys-163, Cys-166, Cys-177, and Cys-180. The segment at Cys-136–Arg-181 adopts an RING-type zinc-finger fold.

Homodimer (via RING-type zinc finger domain). Interacts with GSC2. Interacts with AR/the androgen receptor and TBP. Interacts with TCF20. Interacts with PATZ1. Interacts with TRPS1; negatively regulates TRPS1 transcriptional repressor activity. Interacts with PML (isoform PML-1, isoform PML-2, isoform PML-3, isoform PML-4, isoform PML-5 and isoform PML-6). Interacts with PRDM1/Blimp-1. In terms of processing, sumoylated; conjugated by one or two SUMO1 moieties. Post-translationally, autoubiquitinated. As to expression, in the embryo, expressed primarily in the developing nervous system with strong expression in the dorsal root ganglia and gonads. Ubiquitously expressed in the adult.

It is found in the cytoplasm. The protein resides in the nucleus. Its subcellular location is the PML body. It carries out the reaction S-ubiquitinyl-[E2 ubiquitin-conjugating enzyme]-L-cysteine + [acceptor protein]-L-lysine = [E2 ubiquitin-conjugating enzyme]-L-cysteine + N(6)-ubiquitinyl-[acceptor protein]-L-lysine.. Its pathway is protein modification; protein ubiquitination. In terms of biological role, E3 ubiquitin-protein ligase which binds polysumoylated chains covalently attached to proteins and mediates 'Lys-6'-, 'Lys-11'-, 'Lys-48'- and 'Lys-63'-linked polyubiquitination of those substrates and their subsequent targeting to the proteasome for degradation. Regulates the degradation of several proteins including PML and the transcriptional activator PEA3. Involved in chromosome alignment and spindle assembly, it regulates the kinetochore CENPH-CENPI-CENPK complex by targeting polysumoylated CENPI to proteasomal degradation. Regulates the cellular responses to hypoxia and heat shock through degradation of respectively EPAS1 and PARP1. Alternatively, it may also bind DNA/nucleosomes and have a more direct role in the regulation of transcription for instance enhancing basal transcription and steroid receptor-mediated transcriptional activation. Catalyzes ubiquitination of sumoylated PARP1 in response to PARP1 trapping to chromatin, leading to PARP1 removal from chromatin by VCP/p97. This Mus musculus (Mouse) protein is E3 ubiquitin-protein ligase RNF4.